Here is a 285-residue protein sequence, read N- to C-terminus: Energy-coupling factor transporter ATP-binding protein EcfA2 (285 aa).

The region spanning 3–245 (IKIENLNHIY…VETLEKIGLA (243 aa)) is the ABC transporter domain. 40-47 (GHTGSGKS) is an ATP binding site.

The protein belongs to the ABC transporter superfamily. Energy-coupling factor EcfA family. In terms of assembly, forms a stable energy-coupling factor (ECF) transporter complex composed of 2 membrane-embedded substrate-binding proteins (S component), 2 ATP-binding proteins (A component) and 2 transmembrane proteins (T component).

Its subcellular location is the cell membrane. Functionally, ATP-binding (A) component of a common energy-coupling factor (ECF) ABC-transporter complex. Unlike classic ABC transporters this ECF transporter provides the energy necessary to transport a number of different substrates. The protein is Energy-coupling factor transporter ATP-binding protein EcfA2 of Clostridium perfringens (strain 13 / Type A).